The sequence spans 431 residues: 3-phosphoshikimate 1-carboxyvinyltransferase (431 aa).

The 3-phosphoshikimate site is built by K23, S24, and R28. K23 is a phosphoenolpyruvate binding site. 2 residues coordinate phosphoenolpyruvate: G96 and R124. Positions 169, 171, 317, and 344 each coordinate 3-phosphoshikimate. Q171 is a phosphoenolpyruvate binding site. Catalysis depends on D317, which acts as the Proton acceptor. Positions 348 and 390 each coordinate phosphoenolpyruvate.

The protein belongs to the EPSP synthase family. Monomer.

The protein resides in the cytoplasm. It catalyses the reaction 3-phosphoshikimate + phosphoenolpyruvate = 5-O-(1-carboxyvinyl)-3-phosphoshikimate + phosphate. It functions in the pathway metabolic intermediate biosynthesis; chorismate biosynthesis; chorismate from D-erythrose 4-phosphate and phosphoenolpyruvate: step 6/7. Functionally, catalyzes the transfer of the enolpyruvyl moiety of phosphoenolpyruvate (PEP) to the 5-hydroxyl of shikimate-3-phosphate (S3P) to produce enolpyruvyl shikimate-3-phosphate and inorganic phosphate. The chain is 3-phosphoshikimate 1-carboxyvinyltransferase from Syntrophotalea carbinolica (strain DSM 2380 / NBRC 103641 / GraBd1) (Pelobacter carbinolicus).